A 276-amino-acid chain; its full sequence is ADP-dependent (S)-NAD(P)H-hydrate dehydratase (276 aa).

The region spanning 5-269 is the YjeF C-terminal domain; that stretch reads TPKAMCAWIP…EELPTYLKIF (265 aa). (6S)-NADPHX contacts are provided by Ala40, Gly103, and His152. Position 211 (Gly211) interacts with AMP. (6S)-NADPHX is bound at residue Asp212.

The protein belongs to the NnrD/CARKD family. In terms of assembly, homotetramer. Mg(2+) serves as cofactor.

It carries out the reaction (6S)-NADHX + ADP = AMP + phosphate + NADH + H(+). It catalyses the reaction (6S)-NADPHX + ADP = AMP + phosphate + NADPH + H(+). Catalyzes the dehydration of the S-form of NAD(P)HX at the expense of ADP, which is converted to AMP. Together with NAD(P)HX epimerase, which catalyzes the epimerization of the S- and R-forms, the enzyme allows the repair of both epimers of NAD(P)HX, a damaged form of NAD(P)H that is a result of enzymatic or heat-dependent hydration. This is ADP-dependent (S)-NAD(P)H-hydrate dehydratase from Listeria monocytogenes serovar 1/2a (strain ATCC BAA-679 / EGD-e).